We begin with the raw amino-acid sequence, 130 residues long: Iron-sulfur cluster assembly 1 homolog, mitochondrial (130 aa).

The transit peptide at 1–24 (MATRVVATATVRAVKGRKLIPTRA) directs the protein to the mitochondrion. Residues C58, C122, and C124 each contribute to the Fe cation site.

The protein belongs to the HesB/IscA family. In terms of assembly, interacts with cry. As to expression, detected in head.

The protein localises to the mitochondrion. In terms of biological role, involved in the assembly of mitochondrial iron-sulfur proteins. Probably involved in the binding of an intermediate of Fe/S cluster assembly. Required for maintenance of circadian rhythms under constant darkness. The sequence is that of Iron-sulfur cluster assembly 1 homolog, mitochondrial from Drosophila melanogaster (Fruit fly).